An 87-amino-acid chain; its full sequence is DNA/RNA-binding protein Alba (87 aa).

Lysine 9 is modified (N6-acetyllysine).

This sequence belongs to the histone-like Alba family. Post-translationally, acetylated. Acetylation at Lys-9 decreases DNA-binding affinity.

Its subcellular location is the cytoplasm. It is found in the chromosome. Functionally, binds double-stranded DNA tightly but without sequence specificity. Involved in DNA compaction. This chain is DNA/RNA-binding protein Alba, found in Methanocaldococcus jannaschii (strain ATCC 43067 / DSM 2661 / JAL-1 / JCM 10045 / NBRC 100440) (Methanococcus jannaschii).